The following is a 390-amino-acid chain: Flap endonuclease 1-1 (390 aa).

The segment at 1 to 108 (MGIHQLMQFL…GELARRKKLK (108 aa)) is N-domain. D34 lines the Mg(2+) pocket. Residue R74 coordinates DNA. Mg(2+) is bound by residues D90, E162, E164, D183, and D185. The segment at 126 to 254 (QALLQHQRTT…GTAYKLIKEF (129 aa)) is I-domain. Position 162 (E162) interacts with DNA. The DNA site is built by G232 and D234. Position 234 (D234) interacts with Mg(2+). Residues 348-356 (FQSRLENFF) are interaction with PCNA. The segment at 359-390 (TTKIIHPNNSKAKGKANKKNEQTQKSGGKKKI) is disordered.

Belongs to the XPG/RAD2 endonuclease family. FEN1 subfamily. As to quaternary structure, interacts with PCNA. Three molecules of FEN1 bind to one PCNA trimer with each molecule binding to one PCNA monomer. PCNA stimulates the nuclease activity without altering cleavage specificity. Mg(2+) serves as cofactor. Post-translationally, phosphorylated. Phosphorylation upon DNA damage induces relocalization to the nuclear plasma.

The protein resides in the nucleus. Its subcellular location is the nucleolus. It is found in the nucleoplasm. It localises to the mitochondrion. Functionally, structure-specific nuclease with 5'-flap endonuclease and 5'-3' exonuclease activities involved in DNA replication and repair. During DNA replication, cleaves the 5'-overhanging flap structure that is generated by displacement synthesis when DNA polymerase encounters the 5'-end of a downstream Okazaki fragment. It enters the flap from the 5'-end and then tracks to cleave the flap base, leaving a nick for ligation. Also involved in the long patch base excision repair (LP-BER) pathway, by cleaving within the apurinic/apyrimidinic (AP) site-terminated flap. Acts as a genome stabilization factor that prevents flaps from equilibrating into structures that lead to duplications and deletions. Also possesses 5'-3' exonuclease activity on nicked or gapped double-stranded DNA, and exhibits RNase H activity. Also involved in replication and repair of rDNA and in repairing mitochondrial DNA. This Paramecium tetraurelia protein is Flap endonuclease 1-1.